Reading from the N-terminus, the 383-residue chain is Homeobox protein knotted-1-like 5 (383 aa).

2 disordered regions span residues 1–35 (MSFNSSHLLPPQEDLPLRHFTDQSQQPPPQRHFSE) and 52–73 (TTADSDLAPPHRNGDNSVADTN). One can recognise an ELK domain in the interval 281–301 (ELKHELKQGFKEKIVDIREEI). Residues 302–365 (MRKRRAGKLP…NQRKRNWNSN (64 aa)) constitute a DNA-binding region (homeobox; TALE-type). The segment at 361-383 (NWNSNSSTSSTLTKNKRKRTGKS) is disordered. The span at 362–373 (WNSNSSTSSTLT) shows a compositional bias: low complexity. A compositionally biased stretch (basic residues) spans 374–383 (KNKRKRTGKS).

Belongs to the TALE/KNOX homeobox family. In terms of assembly, may form heterodimeric complex with the TALE/BELL protein BEL1, BLH1 and BLH2. Interacts with OFP1, OFP2, OFP3 and OFP4.

Its subcellular location is the nucleus. This Arabidopsis thaliana (Mouse-ear cress) protein is Homeobox protein knotted-1-like 5 (KNAT5).